The following is a 246-amino-acid chain: MVGDYRGRFSSRRFSDDSDDSSDDASSVEGETTSSMYSAGKEYMETEWTNEKHSLYLKSMEASFVDQLYNSLGALGKNENVSESTRFGSGRKPSQEQFKVLHDGFWQKINVKQPEHRINGRHGGNSHEFLRSPWIKHYKPLVKTQIPVTDEPENQVVSSSNGKKGICSSGSASSLKQLSSHSRDHDQISVGEAEVSDQNFVNEGIKGENGSSKKMKTVMMSESSSTDQVVPLNKLLQHDVNLKSVS.

Disordered stretches follow at residues 1–39 (MVGD…MYSA) and 151–232 (EPEN…VVPL). Positions 168–180 (SSGSASSLKQLSS) are enriched in low complexity.

The protein localises to the nucleus. Functionally, together with COR28, involved in central circadian clock regulation and in flowering promotion, by binding to the chromatin of clock-associated evening genes TOC1, PRR5, ELF4 and cold-responsive genes in order to repress their transcription. Negative regulator of freezing tolerance. The sequence is that of Cold-regulated protein 27 from Arabidopsis thaliana (Mouse-ear cress).